The following is a 454-amino-acid chain: tRNA modification GTPase MnmE (454 aa).

Residues arginine 23, glutamate 80, and lysine 120 each contribute to the (6S)-5-formyl-5,6,7,8-tetrahydrofolate site. Residues 216-377 (GMKVVIAGRP…LRNHLKQSMG (162 aa)) enclose the TrmE-type G domain. Asparagine 226 contributes to the K(+) binding site. Residues 226–231 (NAGKSS), 245–251 (TDIAGTT), 270–273 (DTAG), 335–338 (NKAD), and 358–360 (SAR) each bind GTP. Serine 230 provides a ligand contact to Mg(2+). 3 residues coordinate K(+): threonine 245, isoleucine 247, and threonine 250. Threonine 251 contributes to the Mg(2+) binding site. Lysine 454 lines the (6S)-5-formyl-5,6,7,8-tetrahydrofolate pocket.

The protein belongs to the TRAFAC class TrmE-Era-EngA-EngB-Septin-like GTPase superfamily. TrmE GTPase family. Homodimer. Heterotetramer of two MnmE and two MnmG subunits. It depends on K(+) as a cofactor.

It localises to the cytoplasm. Functionally, exhibits a very high intrinsic GTPase hydrolysis rate. Involved in the addition of a carboxymethylaminomethyl (cmnm) group at the wobble position (U34) of certain tRNAs, forming tRNA-cmnm(5)s(2)U34. This is tRNA modification GTPase MnmE from Salmonella typhimurium (strain LT2 / SGSC1412 / ATCC 700720).